Here is a 129-residue protein sequence, read N- to C-terminus: Glycine cleavage system H protein 2 (129 aa).

Positions 24–105 (SVTVGISDHA…PYVSWFFKLK (82 aa)) constitute a Lipoyl-binding domain. N6-lipoyllysine is present on Lys-65.

It belongs to the GcvH family. As to quaternary structure, the glycine cleavage system is composed of four proteins: P, T, L and H. It depends on (R)-lipoate as a cofactor.

Functionally, the glycine cleavage system catalyzes the degradation of glycine. The H protein shuttles the methylamine group of glycine from the P protein to the T protein. This Pseudomonas aeruginosa (strain ATCC 15692 / DSM 22644 / CIP 104116 / JCM 14847 / LMG 12228 / 1C / PRS 101 / PAO1) protein is Glycine cleavage system H protein 2.